Here is a 270-residue protein sequence, read N- to C-terminus: 5'-AMP-activated protein kinase subunit beta-1 (270 aa).

Residues 1–46 (MGNTSSERAALERHGGHKTPRRDSSGGTKDGDRPKILMDSPEDADL) form a disordered region. The N-myristoyl glycine moiety is linked to residue Gly2. Phosphothreonine is present on Thr4. Residues Ser5 and Ser6 each carry the phosphoserine modification. A Phosphothreonine modification is found at Thr19. The segment covering 21–36 (RRDSSGGTKDGDRPKI) has biased composition (basic and acidic residues). Phosphoserine; by autocatalysis is present on residues Ser24 and Ser25. Phosphoserine is present on residues Ser40, Ser96, and Ser101. Positions 68-163 (EVNDKAPAQA…QVKKTDFEVF (96 aa)) are glycogen-binding domain. Ser108 is modified (phosphoserine; by autocatalysis). Phosphothreonine is present on Thr148. A Phosphoserine modification is found at Ser182.

It belongs to the 5'-AMP-activated protein kinase beta subunit family. AMPK is a heterotrimer of an alpha catalytic subunit (PRKAA1 or PRKAA2), a beta (PRKAB1 or PRKAB2) and a gamma non-catalytic subunits (PRKAG1, PRKAG2 or PRKAG3). Interacts with FNIP1 and FNIP2. In terms of processing, phosphorylated when associated with the catalytic subunit (PRKAA1 or PRKAA2). Phosphorylated by ULK1; leading to negatively regulate AMPK activity and suggesting the existence of a regulatory feedback loop between ULK1 and AMPK.

Its function is as follows. Non-catalytic subunit of AMP-activated protein kinase (AMPK), an energy sensor protein kinase that plays a key role in regulating cellular energy metabolism. In response to reduction of intracellular ATP levels, AMPK activates energy-producing pathways and inhibits energy-consuming processes: inhibits protein, carbohydrate and lipid biosynthesis, as well as cell growth and proliferation. AMPK acts via direct phosphorylation of metabolic enzymes, and by longer-term effects via phosphorylation of transcription regulators. Also acts as a regulator of cellular polarity by remodeling the actin cytoskeleton; probably by indirectly activating myosin. Beta non-catalytic subunit acts as a scaffold on which the AMPK complex assembles, via its C-terminus that bridges alpha (PRKAA1 or PRKAA2) and gamma subunits (PRKAG1, PRKAG2 or PRKAG3). This is 5'-AMP-activated protein kinase subunit beta-1 (PRKAB1) from Pongo abelii (Sumatran orangutan).